The chain runs to 333 residues: Holliday junction branch migration complex subunit RuvB (333 aa).

The tract at residues 1–181 (MTRILDNDLI…FGITGHMEYY (181 aa)) is large ATPase domain (RuvB-L). ATP is bound by residues L20, R21, G62, K65, T66, T67, 128 to 130 (EDF), R171, Y181, and R218. Residue T66 participates in Mg(2+) binding. A small ATPAse domain (RuvB-S) region spans residues 182–252 (QTADLTEIVE…ITDKALTMLD (71 aa)). A head domain (RuvB-H) region spans residues 255 to 333 (QEGLDYVDQK…HLGYPYEKKH (79 aa)). Residues R291, R310, R312, and R315 each contribute to the DNA site.

This sequence belongs to the RuvB family. In terms of assembly, homohexamer. Forms an RuvA(8)-RuvB(12)-Holliday junction (HJ) complex. HJ DNA is sandwiched between 2 RuvA tetramers; dsDNA enters through RuvA and exits via RuvB. An RuvB hexamer assembles on each DNA strand where it exits the tetramer. Each RuvB hexamer is contacted by two RuvA subunits (via domain III) on 2 adjacent RuvB subunits; this complex drives branch migration. In the full resolvosome a probable DNA-RuvA(4)-RuvB(12)-RuvC(2) complex forms which resolves the HJ.

It localises to the cytoplasm. The catalysed reaction is ATP + H2O = ADP + phosphate + H(+). Its function is as follows. The RuvA-RuvB-RuvC complex processes Holliday junction (HJ) DNA during genetic recombination and DNA repair, while the RuvA-RuvB complex plays an important role in the rescue of blocked DNA replication forks via replication fork reversal (RFR). RuvA specifically binds to HJ cruciform DNA, conferring on it an open structure. The RuvB hexamer acts as an ATP-dependent pump, pulling dsDNA into and through the RuvAB complex. RuvB forms 2 homohexamers on either side of HJ DNA bound by 1 or 2 RuvA tetramers; 4 subunits per hexamer contact DNA at a time. Coordinated motions by a converter formed by DNA-disengaged RuvB subunits stimulates ATP hydrolysis and nucleotide exchange. Immobilization of the converter enables RuvB to convert the ATP-contained energy into a lever motion, pulling 2 nucleotides of DNA out of the RuvA tetramer per ATP hydrolyzed, thus driving DNA branch migration. The RuvB motors rotate together with the DNA substrate, which together with the progressing nucleotide cycle form the mechanistic basis for DNA recombination by continuous HJ branch migration. Branch migration allows RuvC to scan DNA until it finds its consensus sequence, where it cleaves and resolves cruciform DNA. The sequence is that of Holliday junction branch migration complex subunit RuvB from Streptococcus equi subsp. zooepidemicus (strain MGCS10565).